Consider the following 156-residue polypeptide: Small ribosomal subunit protein uS7 (156 aa).

The protein belongs to the universal ribosomal protein uS7 family. As to quaternary structure, part of the 30S ribosomal subunit. Contacts proteins S9 and S11.

One of the primary rRNA binding proteins, it binds directly to 16S rRNA where it nucleates assembly of the head domain of the 30S subunit. Is located at the subunit interface close to the decoding center, probably blocks exit of the E-site tRNA. The chain is Small ribosomal subunit protein uS7 from Clostridium perfringens (strain ATCC 13124 / DSM 756 / JCM 1290 / NCIMB 6125 / NCTC 8237 / Type A).